The chain runs to 195 residues: uncharacterized protein (195 aa).

A signal peptide spans M1–A17. An N-linked (GlcNAc...) asparagine glycan is attached at N75.

It is found in the secreted. This is an uncharacterized protein from Arthroderma benhamiae (strain ATCC MYA-4681 / CBS 112371) (Trichophyton mentagrophytes).